The primary structure comprises 117 residues: Cysteine rich necrotrophic effector Tox1 (117 aa).

Positions 1–17 (MKLTMVLSVAFATLTFA) are cleaved as a signal peptide. 8 disulfide bridges follow: cysteine 36-cysteine 87, cysteine 44-cysteine 55, cysteine 53-cysteine 58, cysteine 54-cysteine 98, cysteine 63-cysteine 83, cysteine 67-cysteine 117, cysteine 86-cysteine 97, and cysteine 107-cysteine 110. Residues 87–117 (CNAGGESHELCCSIASAGIDCNPCTAGLRMC) form a chitin-binding domain region.

As to quaternary structure, interacts with host cell wall-associated kinase receptor Snn1.

Its subcellular location is the secreted. Necrotrophic effector that plays a critical role during fungal penetration, via its interaction with the host Snn1 protein. Snn1 is a member of the wall-associated kinase class of receptors, which are known to drive pathways for biotrophic pathogen resistance. Recognition of Tox1 by Snn1 induces mitogen-activated protein kinase genes such as MAPK3 and activates programmed cell death, which allows this necrotroph to gain nutrients and sporulate. Recognition of Tox1 by Snn1 also induces other plant defense responses, including oxidative burst and pathogenesis related (PR) gene expression. The development of necrosis and disease induced by Tox1, and particularly penetration during infection, requires light, which is probably related to the light-dependent expression of host Snn1. Tox1 plays an additional role in providing significant protection from wheat chitinases by binding chitin in the fungal cell wall. This Phaeosphaeria nodorum (strain SN15 / ATCC MYA-4574 / FGSC 10173) (Glume blotch fungus) protein is Cysteine rich necrotrophic effector Tox1.